The sequence spans 337 residues: Mitochondrial glutathione transporter SLC25A40 (337 aa).

Solcar repeat units follow at residues 14-132 (VTPL…LSAF), 140-224 (NETR…LKRW), and 234-328 (PTFM…GKSF). Transmembrane regions (helical) follow at residues 20 to 40 (MIAS…LDVV), 104 to 124 (LWSG…IYFT), 146 to 166 (IVAG…LELI), 200 to 221 (WAPT…YENL), 240 to 260 (FTSG…FDVV), and 299 to 319 (GLFT…AIMI).

The protein belongs to the mitochondrial carrier (TC 2.A.29) family.

It localises to the mitochondrion inner membrane. The enzyme catalyses glutathione(in) = glutathione(out). Its function is as follows. Probable mitochondrial transporter required for glutathione import into mitochondria. Glutathione, which plays key roles in oxidative metabolism, is produced exclusively in the cytosol and is imported in many organelles. Mitochondrial glutathione is required for the activity and stability of proteins containing iron-sulfur clusters, as well as erythropoiesis. This Mus musculus (Mouse) protein is Mitochondrial glutathione transporter SLC25A40.